The primary structure comprises 189 residues: UPF0301 protein HRM2_24640 (189 aa).

Belongs to the UPF0301 (AlgH) family.

The sequence is that of UPF0301 protein HRM2_24640 from Desulforapulum autotrophicum (strain ATCC 43914 / DSM 3382 / VKM B-1955 / HRM2) (Desulfobacterium autotrophicum).